The primary structure comprises 158 residues: MRSIAGLHKLKMEIFNVEELINMKPFKNMNKITINQNDNCILANRCFVKIDTPRYIPSTSISSSNIIRIRNHDFTLSELLYSPFHFQQPQFQYLLPGFVLTCIDKVSKQQKECKYCISNRGDDDSLSINLFIPTINKSIYIIIGLRMKNFWKPKFEIE.

This sequence belongs to the orthopoxvirus OPG058 family.

The protein is Protein OPG060 (OPG060) of Homo sapiens (Human).